The sequence spans 198 residues: HTH-type transcriptional regulator BetI (198 aa).

The HTH tetR-type domain occupies 8-68; that stretch reads PLRRRELIDA…ATMRHLLREL (61 aa). A DNA-binding region (H-T-H motif) is located at residues 31-50; the sequence is TVAQIAHEAGVSPALAHHYF.

The protein operates within amine and polyamine biosynthesis; betaine biosynthesis via choline pathway [regulation]. In terms of biological role, repressor involved in the biosynthesis of the osmoprotectant glycine betaine. It represses transcription of the choline transporter BetT and the genes of BetAB involved in the synthesis of glycine betaine. The polypeptide is HTH-type transcriptional regulator BetI (Brucella suis (strain ATCC 23445 / NCTC 10510)).